A 601-amino-acid polypeptide reads, in one-letter code: HMG domain-containing protein 4 (601 aa).

Lys8 participates in a covalent cross-link: Glycyl lysine isopeptide (Lys-Gly) (interchain with G-Cter in SUMO2). Disordered regions lie at residues 51 to 410 (VRNS…KKKN) and 473 to 514 (TTVK…ASPA). Residues 82–93 (DYYYGDISSLES) are compositionally biased toward low complexity. Residue Ser102 is modified to Phosphoserine. A Glycyl lysine isopeptide (Lys-Gly) (interchain with G-Cter in SUMO2) cross-link involves residue Lys191. The residue at position 197 (Ser197) is a Phosphoserine. 2 stretches are compositionally biased toward polar residues: residues 212–221 (QYPSQQATVK) and 270–282 (DASQ…SANL). A compositionally biased stretch (basic residues) spans 316–344 (IKKKKKSKKSKKKKDKEKHKEKRHSKSKR). A compositionally biased stretch (basic and acidic residues) spans 394-404 (EEKDKERERGE). A DNA-binding region (HMG box) is located at residues 407–475 (KKKNMSAYQV…KQNKAEATTV (69 aa)). 3 positions are modified to phosphoserine: Ser497, Ser502, and Ser512.

The protein resides in the nucleus. In terms of biological role, negatively regulates Wnt/beta-catenin signaling during development. This chain is HMG domain-containing protein 4 (HMGXB4), found in Homo sapiens (Human).